Consider the following 449-residue polypeptide: Glutamate--tRNA ligase 2 (449 aa).

Residues 11–21 (PSPTGFLHIGN) carry the 'HIGH' region motif. The short motif at 242-246 (GLSKR) is the 'KMSKS' region element. Residue Lys-245 coordinates ATP.

Belongs to the class-I aminoacyl-tRNA synthetase family. Glutamate--tRNA ligase type 1 subfamily. Monomer.

It is found in the cytoplasm. It carries out the reaction tRNA(Glu) + L-glutamate + ATP = L-glutamyl-tRNA(Glu) + AMP + diphosphate. Functionally, catalyzes the attachment of glutamate to tRNA(Glu) in a two-step reaction: glutamate is first activated by ATP to form Glu-AMP and then transferred to the acceptor end of tRNA(Glu). In Methylorubrum populi (strain ATCC BAA-705 / NCIMB 13946 / BJ001) (Methylobacterium populi), this protein is Glutamate--tRNA ligase 2.